The primary structure comprises 855 residues: E3 ubiquitin-protein ligase TRIM71 (855 aa).

An N-acetylalanine modification is found at A2. The RING-type zinc-finger motif lies at C12 to D94. Over residues S26 to S42 the composition is skewed to low complexity. Disordered regions lie at residues S26–P48 and E127–S177. The span at R135–G145 shows a compositional bias: gly residues. Residues S147–A157 are compositionally biased toward basic residues. The segment at R181–G228 adopts a B box-type 1; atypical zinc-finger fold. Residues E260–L301 form a B box-type 2 zinc finger. Zn(2+) is bound by residues C265, H268, C288, and H293. Coiled-coil stretches lie at residues Q314–K352 and Q378–E411. Residues S466 to V567 form a Filamin repeat. NHL repeat units follow at residues G580 to C623, H627 to E670, L674 to D717, L721 to D764, A768 to N811, and L815 to F855.

Belongs to the TRIM/RBCC family. In terms of assembly, interacts (via NHL repeats) with AGO2; the interaction increases in presence of RNA. Interacts with HSP90AA1. Interacts (via NHL repeats) with MOV10, PABPC1, PUM1, PUM2, STAU2, XRN1 and XRN2 in an RNA-dependent manner. Interacts with SHCBP1; leading to enhance its stability. Autoubiquitinated. Highly expressed in undifferentiated embryonic stem cells (ESCs). Expressed in the epiblast and in interfollicular epidermal stem cells during early development. Also expressed in male germ cells and in the reproductive tract. Highly expressed in neuroepithelial cells, and its expression declines as neurogenesis proceeds (at protein level). Expressed in ependymal cells of the brain.

It localises to the cytoplasm. Its subcellular location is the P-body. The enzyme catalyses S-ubiquitinyl-[E2 ubiquitin-conjugating enzyme]-L-cysteine + [acceptor protein]-L-lysine = [E2 ubiquitin-conjugating enzyme]-L-cysteine + N(6)-ubiquitinyl-[acceptor protein]-L-lysine.. It participates in protein modification; protein ubiquitination. E3 ubiquitin-protein ligase that cooperates with the microRNAs (miRNAs) machinery and promotes embryonic stem cells proliferation and maintenance. Binds to miRNAs and associates with AGO2, participating in post-transcriptional repression of transcripts such as CDKN1A. Facilitates the G1-S transition to promote rapid embryonic stem cell self-renewal by repressing CDKN1A expression. In addition, participates in post-transcriptional mRNA repression in a miRNA independent mechanism. Required to maintain proliferation and prevent premature differentiation of neural progenitor cells during early neural development: positively regulates FGF signaling by controlling the stability of SHCBP1. Specific regulator of miRNA biogenesis. miRNA Binds MIR29A hairpin and postranscriptionally modulates MIR29A levels, which indirectly regulates TET proteins expression. This Mus musculus (Mouse) protein is E3 ubiquitin-protein ligase TRIM71 (Trim71).